Consider the following 126-residue polypeptide: uncharacterized protein (126 aa).

The HTH hxlR-type domain maps to 8 to 106 (ISVEATLEVI…WGANHINRVY (99 aa)).

This is an uncharacterized protein from Bacillus subtilis (strain 168).